The following is a 623-amino-acid chain: uncharacterized protein (623 aa).

Positions 256–351 form a coiled coil; that stretch reads AEEKLLSKNK…EEIHGLKKKN (96 aa). Disordered stretches follow at residues 417–485 and 497–536; these read NRRN…SPSS and ALSSNGKKKTTRAIEDEEEEEDVKPENSNNNKKPENECAT. A compositionally biased stretch (polar residues) spans 422–431; it reads LESVPFNTLS. Residues 452–481 are compositionally biased toward basic and acidic residues; the sequence is ELKKPAESYGDETKKPNQHNKDGSIDEKPK.

This is an uncharacterized protein from Arabidopsis thaliana (Mouse-ear cress).